The chain runs to 691 residues: T-box transcription factor TBX2-B (691 aa).

The T-box DNA-binding region spans 104–277 (LWDQFHKIGT…HNPFAKGFRD (174 aa)). Disordered stretches follow at residues 301–440 (CKAD…SLSK) and 612–691 (NLLT…ESPK). Over residues 325–335 (HSPLSAAPSPL) the composition is skewed to low complexity. Basic and acidic residues-rich tracts occupy residues 340–361 (TNRE…EVRS), 378–402 (RLED…RKDG), and 415–433 (SLEK…KSDP). Low complexity predominate over residues 624–639 (PGSESSKPGSSRESSP). The stretch at 659-684 (SMKDSINELQRIQRLVSGLERQREVS) forms a coiled coil. A compositionally biased stretch (basic and acidic residues) spans 678–691 (ERQREVSPGRESPK).

Binds DNA as a monomer.

It localises to the nucleus. Its function is as follows. Transcription factor which acts as a transcriptional repressor. May also function as a transcriptional activator. Binds to the palindromic T site 5'-TTCACACCTAGGTGTGAA-3' DNA sequence, or a half-site, which are present in the regulatory region of several genes. This chain is T-box transcription factor TBX2-B (tbx2-b), found in Xenopus laevis (African clawed frog).